A 407-amino-acid chain; its full sequence is uncharacterized protein (407 aa).

Residues 10–37 (DKLEQLANDVVTELTDMENKYKDLHVEL) are a coiled coil.

This is an uncharacterized protein from Bacillus subtilis (strain 168).